Consider the following 353-residue polypeptide: Anthranilate phosphoribosyltransferase (353 aa).

5-phospho-alpha-D-ribose 1-diphosphate is bound by residues Gly86, 89–90, 96–99, 114–122, and Ser126; these read GD, NVST, and KHGNRAVSG. Gly86 provides a ligand contact to anthranilate. Ser98 lines the Mg(2+) pocket. Asn117 contacts anthranilate. Arg172 is an anthranilate binding site. Residues Asp231 and Glu232 each contribute to the Mg(2+) site.

Belongs to the anthranilate phosphoribosyltransferase family. In terms of assembly, homodimer. The cofactor is Mg(2+).

The enzyme catalyses N-(5-phospho-beta-D-ribosyl)anthranilate + diphosphate = 5-phospho-alpha-D-ribose 1-diphosphate + anthranilate. Its pathway is amino-acid biosynthesis; L-tryptophan biosynthesis; L-tryptophan from chorismate: step 2/5. Functionally, catalyzes the transfer of the phosphoribosyl group of 5-phosphorylribose-1-pyrophosphate (PRPP) to anthranilate to yield N-(5'-phosphoribosyl)-anthranilate (PRA). This Pseudomonas syringae pv. syringae (strain B728a) protein is Anthranilate phosphoribosyltransferase.